We begin with the raw amino-acid sequence, 277 residues long: Undecaprenyl-diphosphatase (277 aa).

7 helical membrane-spanning segments follow: residues 3-23 (IALL…EFLP), 44-64 (AKVF…LVYW), 82-102 (QFAL…LLFG), 109-129 (LFTP…ILWA), 189-209 (TDFS…YSLF), 218-238 (ADAP…WLCI), and 253-273 (FAWY…SGVV).

This sequence belongs to the UppP family.

The protein localises to the cell inner membrane. The enzyme catalyses di-trans,octa-cis-undecaprenyl diphosphate + H2O = di-trans,octa-cis-undecaprenyl phosphate + phosphate + H(+). Functionally, catalyzes the dephosphorylation of undecaprenyl diphosphate (UPP). Confers resistance to bacitracin. This chain is Undecaprenyl-diphosphatase, found in Polaromonas naphthalenivorans (strain CJ2).